Here is a 181-residue protein sequence, read N- to C-terminus: Peptidyl-prolyl cis-trans isomerase H (181 aa).

The 164-residue stretch at 17 to 180 folds into the PPIase cyclophilin-type domain; it reads FFDITLGGES…QDVTIIQCGE (164 aa).

It belongs to the cyclophilin-type PPIase family. PPIase H subfamily.

Its subcellular location is the nucleus. It carries out the reaction [protein]-peptidylproline (omega=180) = [protein]-peptidylproline (omega=0). PPIases accelerate the folding of proteins. It catalyzes the cis-trans isomerization of proline imidic peptide bonds in oligopeptides. The protein is Peptidyl-prolyl cis-trans isomerase H (cyp3) of Aspergillus oryzae (strain ATCC 42149 / RIB 40) (Yellow koji mold).